Consider the following 76-residue polypeptide: Small ribosomal subunit protein bS18 (76 aa).

Belongs to the bacterial ribosomal protein bS18 family. As to quaternary structure, part of the 30S ribosomal subunit. Forms a tight heterodimer with protein bS6.

Its function is as follows. Binds as a heterodimer with protein bS6 to the central domain of the 16S rRNA, where it helps stabilize the platform of the 30S subunit. In Methylococcus capsulatus (strain ATCC 33009 / NCIMB 11132 / Bath), this protein is Small ribosomal subunit protein bS18.